The following is a 325-amino-acid chain: MAVLKQPQHHHGKHGGRSFYQLIAYLMLTSRLDNYGMLFTSFGGAGIYKSQDYTSTTSQASILRLAGLCTAHCVLLGAAGNTWNDWMDRDIDSKVARTKDRPLASGKISSGEAFTWMAFLYSTSVGMLKAMLGDRNVWPFMVPLTAIILVYPLGKRPIARKLRIYPQYLLGIAVGYPTMYGWAAVYGPCMPISEILHRCVPLWIFLFFWSFYANTSYSYQDVEDDRKMKVNSAYNLAGKRIRALLAILASIALSTIPFVLRPFSSAWLWLSWVGAWVPGIIQQLLSFDPSKPESGGVLHLSTVKLGLWTVFACTLELYLSNRAVI.

Helical transmembrane passes span Ala60–Gly80, Ala113–Gly133, Trp138–Ile158, Leu169–Cys189, and Ile192–Tyr212. Asn214 is a glycosylation site (N-linked (GlcNAc...) asparagine). The next 3 helical transmembrane spans lie at Ala243–Phe263, Trp267–Phe287, and Gly295–Leu315.

The protein belongs to the UbiA prenyltransferase family. Requires Mg(2+) as cofactor.

It localises to the membrane. It carries out the reaction 6-hydroxymellein + (2E,6E)-farnesyl diphosphate = verruculide C + diphosphate. The protein operates within secondary metabolite biosynthesis; terpenoid biosynthesis. In terms of biological role, 6-hydroxymellein 5-farnesyltransferase; part of the gene cluster that mediates the biosynthesis of chrodrimanin B, a meroterpenoid that acts as a potent blocker of insect GABA-gated chloride channels. The first step of the pathway is the biosynthesis of 6-hydroxymellein by the polyketide synthase cdmE. The prenyltransferase cdmH acts as a 6-hydroxymellein 5-farnesyltransferase and produces the hydrophobic metabolite verruculide C. The FAD-dependent monooxygenase cdmI further converts verruculide C into verruculide B. The terpene cyclase cdmG then produced the pentacyclic molecule 3-hydroxypentacecilide A, the backbone structure of chrodrimanin B, via folding the farnesyl moiety of the substrate into the chair-boat conformation. The short-chain dehydrogenase/reductase cdmF functions as the 3-OH dehydrogenase that oxidizes the C-3 hydroxyl group of 3-hydroxypentacecilide A and produces chrodrimanin C, the dehydrogenated product of 3-hydroxypentacecilide A. The cytochrome P450 monooxygenase cdmJ then accepts both 3-hydroxypentacecilide A and chrodrimanin C and functions as a C-7-beta-hydroxylase to produce respectively chrodrimanin H and chrodrimanin F. The dioxygenase cdmA accepts chrodrimanin H to afford chrodrimanin E, which is further transformed to chrodrimanin A by the dioxygenase cdmD. CdmA can also accept chrodrimanin C as substrate to convert it into verruculide A, which is further converted into chrodrimanin T by cdmD. The last step of the biosynthesis is proposed to be performed by the acetyltransferase cdmC which acetylates chrodrimanin A to yield chrodrimanin B. The pathway may also lead to the production of additional shunt products, including chrodrimanins T and U. The chain is 6-hydroxymellein 5-farnesyltransferase cdmH from Talaromyces verruculosus (Penicillium verruculosum).